Reading from the N-terminus, the 207-residue chain is Large ribosomal subunit protein bL25 (207 aa).

Residues 171–207 (EEETVVTVSAPRAEEEPTTTEAPEPEAVHGKDEEPVE) are disordered. A compositionally biased stretch (basic and acidic residues) spans 196 to 207 (EAVHGKDEEPVE).

This sequence belongs to the bacterial ribosomal protein bL25 family. CTC subfamily. Part of the 50S ribosomal subunit; part of the 5S rRNA/L5/L18/L25 subcomplex. Contacts the 5S rRNA. Binds to the 5S rRNA independently of L5 and L18.

Its function is as follows. This is one of the proteins that binds to the 5S RNA in the ribosome where it forms part of the central protuberance. The polypeptide is Large ribosomal subunit protein bL25 (Listeria monocytogenes serotype 4b (strain F2365)).